The primary structure comprises 263 residues: Bidirectional sugar transporter SWEET3 (263 aa).

Residues 1–7 (MGDKLRL) are Extracellular-facing. Residues 8–28 (SIGILGNGASLLLYTAPIVTF) traverse the membrane as a helical segment. The region spanning 9-97 (IGILGNGASL…FIYFYYASPK (89 aa)) is the MtN3/slv 1 domain. The Cytoplasmic portion of the chain corresponds to 29-42 (SRVFKKKSTEEFSC). The chain crosses the membrane as a helical span at residues 43-63 (FPYVMTLFNCLIYTWYGLPIV). The Extracellular segment spans residues 64–71 (SHLWENLP). A helical membrane pass occupies residues 72-92 (LVTINGVGILLESIFIFIYFY). The Cytoplasmic segment spans residues 93–103 (YASPKEKIKVG). The chain crosses the membrane as a helical span at residues 104 to 124 (VTFVPVIVGFGLTTAISALVF). Topologically, residues 125–132 (DDHRHRKS) are extracellular. The helical transmembrane segment at 133–153 (FVGSVGLVASISMYGSPLVVM) threads the bilayer. The MtN3/slv 2 domain maps to 133–217 (FVGSVGLVAS…ILYFKYKNKK (85 aa)). Topologically, residues 154-165 (KKVIETRSVEYM) are cytoplasmic. The helical transmembrane segment at 166–186 (PFYLSFFSFLASSLWLAYGLL) threads the bilayer. The Extracellular portion of the chain corresponds to 187–190 (SHDL). Residues 191-211 (FLASPNMVATPLGILQLILYF) traverse the membrane as a helical segment. At 212–263 (KYKNKKDLAPTTMVITKRNDHDDKNKATLEFVVDVDRNSDTNEKNSNNASSI) the chain is on the cytoplasmic side.

This sequence belongs to the SWEET sugar transporter family. As to quaternary structure, forms heterooligomers with SWEET11, SWEET13 and SWEET17.

The protein localises to the cell membrane. Its function is as follows. Mediates both low-affinity uptake and efflux of sugar across the plasma membrane. In Arabidopsis thaliana (Mouse-ear cress), this protein is Bidirectional sugar transporter SWEET3.